We begin with the raw amino-acid sequence, 341 residues long: S-adenosylmethionine:tRNA ribosyltransferase-isomerase (341 aa).

It belongs to the QueA family. Monomer.

The protein localises to the cytoplasm. It carries out the reaction 7-aminomethyl-7-carbaguanosine(34) in tRNA + S-adenosyl-L-methionine = epoxyqueuosine(34) in tRNA + adenine + L-methionine + 2 H(+). It functions in the pathway tRNA modification; tRNA-queuosine biosynthesis. Functionally, transfers and isomerizes the ribose moiety from AdoMet to the 7-aminomethyl group of 7-deazaguanine (preQ1-tRNA) to give epoxyqueuosine (oQ-tRNA). The sequence is that of S-adenosylmethionine:tRNA ribosyltransferase-isomerase from Staphylococcus saprophyticus subsp. saprophyticus (strain ATCC 15305 / DSM 20229 / NCIMB 8711 / NCTC 7292 / S-41).